A 350-amino-acid polypeptide reads, in one-letter code: Holliday junction branch migration complex subunit RuvB (350 aa).

Residues 1 to 22 (MDHTASLSPVRPEAQPTDDRER) form a disordered region. The large ATPase domain (RuvB-L) stretch occupies residues 1–185 (MDHTASLSPV…FGIVERFEFY (185 aa)). Residues Leu-24, Arg-25, Gly-66, Lys-69, Thr-70, Thr-71, 132-134 (EDY), Arg-175, Tyr-185, and Arg-222 each bind ATP. Thr-70 contributes to the Mg(2+) binding site. Residues 186–256 (TPEELAAIVQ…IVRAGLAHLK (71 aa)) form a small ATPAse domain (RuvB-S) region. The tract at residues 259–350 (ELGLELHDIQ…PHSPEQGTLL (92 aa)) is head domain (RuvB-H). Arg-314 and Arg-319 together coordinate DNA.

Belongs to the RuvB family. Homohexamer. Forms an RuvA(8)-RuvB(12)-Holliday junction (HJ) complex. HJ DNA is sandwiched between 2 RuvA tetramers; dsDNA enters through RuvA and exits via RuvB. An RuvB hexamer assembles on each DNA strand where it exits the tetramer. Each RuvB hexamer is contacted by two RuvA subunits (via domain III) on 2 adjacent RuvB subunits; this complex drives branch migration. In the full resolvosome a probable DNA-RuvA(4)-RuvB(12)-RuvC(2) complex forms which resolves the HJ.

It localises to the cytoplasm. It catalyses the reaction ATP + H2O = ADP + phosphate + H(+). Its function is as follows. The RuvA-RuvB-RuvC complex processes Holliday junction (HJ) DNA during genetic recombination and DNA repair, while the RuvA-RuvB complex plays an important role in the rescue of blocked DNA replication forks via replication fork reversal (RFR). RuvA specifically binds to HJ cruciform DNA, conferring on it an open structure. The RuvB hexamer acts as an ATP-dependent pump, pulling dsDNA into and through the RuvAB complex. RuvB forms 2 homohexamers on either side of HJ DNA bound by 1 or 2 RuvA tetramers; 4 subunits per hexamer contact DNA at a time. Coordinated motions by a converter formed by DNA-disengaged RuvB subunits stimulates ATP hydrolysis and nucleotide exchange. Immobilization of the converter enables RuvB to convert the ATP-contained energy into a lever motion, pulling 2 nucleotides of DNA out of the RuvA tetramer per ATP hydrolyzed, thus driving DNA branch migration. The RuvB motors rotate together with the DNA substrate, which together with the progressing nucleotide cycle form the mechanistic basis for DNA recombination by continuous HJ branch migration. Branch migration allows RuvC to scan DNA until it finds its consensus sequence, where it cleaves and resolves cruciform DNA. This chain is Holliday junction branch migration complex subunit RuvB, found in Treponema pallidum (strain Nichols).